We begin with the raw amino-acid sequence, 208 residues long: Uracil phosphoribosyltransferase (208 aa).

Residues arginine 78, arginine 103, and 130-138 (DPMLATGGS) contribute to the 5-phospho-alpha-D-ribose 1-diphosphate site. Uracil-binding positions include isoleucine 193 and 198–200 (GDA). Residue aspartate 199 coordinates 5-phospho-alpha-D-ribose 1-diphosphate.

It belongs to the UPRTase family. Requires Mg(2+) as cofactor.

It carries out the reaction UMP + diphosphate = 5-phospho-alpha-D-ribose 1-diphosphate + uracil. The protein operates within pyrimidine metabolism; UMP biosynthesis via salvage pathway; UMP from uracil: step 1/1. Allosterically activated by GTP. Functionally, catalyzes the conversion of uracil and 5-phospho-alpha-D-ribose 1-diphosphate (PRPP) to UMP and diphosphate. The polypeptide is Uracil phosphoribosyltransferase (Psychromonas ingrahamii (strain DSM 17664 / CCUG 51855 / 37)).